We begin with the raw amino-acid sequence, 79 residues long: Small ribosomal subunit protein eS17 (79 aa).

This sequence belongs to the eukaryotic ribosomal protein eS17 family.

This chain is Small ribosomal subunit protein eS17, found in Saccharolobus solfataricus (strain ATCC 35092 / DSM 1617 / JCM 11322 / P2) (Sulfolobus solfataricus).